We begin with the raw amino-acid sequence, 143 residues long: Large-conductance mechanosensitive channel (143 aa).

Helical transmembrane passes span Val16–Leu36, Ile40–Ile60, and Gly87–Val107.

It belongs to the MscL family. Homopentamer.

It is found in the cell inner membrane. Functionally, channel that opens in response to stretch forces in the membrane lipid bilayer. May participate in the regulation of osmotic pressure changes within the cell. The protein is Large-conductance mechanosensitive channel of Psychrobacter sp. (strain PRwf-1).